The following is a 383-amino-acid chain: 8-amino-7-oxononanoate synthase (383 aa).

Position 21 (Arg21) interacts with substrate. 108–109 (GY) is a pyridoxal 5'-phosphate binding site. His133 provides a ligand contact to substrate. Residues Ser179, His207, and Thr233 each coordinate pyridoxal 5'-phosphate. Lys236 is modified (N6-(pyridoxal phosphate)lysine). Residue Thr350 participates in substrate binding.

It belongs to the class-II pyridoxal-phosphate-dependent aminotransferase family. BioF subfamily. As to quaternary structure, homodimer. Requires pyridoxal 5'-phosphate as cofactor.

It catalyses the reaction 6-carboxyhexanoyl-[ACP] + L-alanine + H(+) = (8S)-8-amino-7-oxononanoate + holo-[ACP] + CO2. The protein operates within cofactor biosynthesis; biotin biosynthesis. Its function is as follows. Catalyzes the decarboxylative condensation of pimeloyl-[acyl-carrier protein] and L-alanine to produce 8-amino-7-oxononanoate (AON), [acyl-carrier protein], and carbon dioxide. In Yersinia pestis bv. Antiqua (strain Angola), this protein is 8-amino-7-oxononanoate synthase.